We begin with the raw amino-acid sequence, 276 residues long: Putative pyruvate, phosphate dikinase regulatory protein (276 aa).

154-161 (GVSRTSKS) is a binding site for ADP.

This sequence belongs to the pyruvate, phosphate/water dikinase regulatory protein family. PDRP subfamily.

It catalyses the reaction N(tele)-phospho-L-histidyl/L-threonyl-[pyruvate, phosphate dikinase] + ADP = N(tele)-phospho-L-histidyl/O-phospho-L-threonyl-[pyruvate, phosphate dikinase] + AMP + H(+). It carries out the reaction N(tele)-phospho-L-histidyl/O-phospho-L-threonyl-[pyruvate, phosphate dikinase] + phosphate + H(+) = N(tele)-phospho-L-histidyl/L-threonyl-[pyruvate, phosphate dikinase] + diphosphate. Functionally, bifunctional serine/threonine kinase and phosphorylase involved in the regulation of the pyruvate, phosphate dikinase (PPDK) by catalyzing its phosphorylation/dephosphorylation. This Wolbachia pipientis wMel protein is Putative pyruvate, phosphate dikinase regulatory protein.